The primary structure comprises 146 residues: Hemoglobin subunit beta (146 aa).

N-acetylvaline is present on Val1. A Globin domain is found at 2–146 (HLTGEEKSAV…VANALAHKYH (145 aa)). At Thr12 the chain carries Phosphothreonine. Ser44 is subject to Phosphoserine. Lys59 carries the N6-acetyllysine modification. His63 lines the heme b pocket. Position 82 is an N6-acetyllysine (Lys82). His92 provides a ligand contact to heme b. Cys93 bears the S-nitrosocysteine mark. Lys144 carries the N6-acetyllysine modification.

It belongs to the globin family. As to quaternary structure, heterotetramer of two alpha chains and two beta chains. Red blood cells.

Functionally, involved in oxygen transport from the lung to the various peripheral tissues. In Leontocebus fuscicollis (Brown-mantled tamarin), this protein is Hemoglobin subunit beta (HBB).